A 429-amino-acid chain; its full sequence is Enolase (429 aa).

Glutamine 167 is a (2R)-2-phosphoglycerate binding site. Glutamate 209 serves as the catalytic Proton donor. 3 residues coordinate Mg(2+): aspartate 246, glutamate 289, and aspartate 316. Residues lysine 341, arginine 370, serine 371, and lysine 392 each coordinate (2R)-2-phosphoglycerate. The active-site Proton acceptor is lysine 341.

The protein belongs to the enolase family. As to quaternary structure, component of the RNA degradosome, a multiprotein complex involved in RNA processing and mRNA degradation. Mg(2+) serves as cofactor.

Its subcellular location is the cytoplasm. The protein resides in the secreted. It localises to the cell surface. The enzyme catalyses (2R)-2-phosphoglycerate = phosphoenolpyruvate + H2O. It participates in carbohydrate degradation; glycolysis; pyruvate from D-glyceraldehyde 3-phosphate: step 4/5. Catalyzes the reversible conversion of 2-phosphoglycerate (2-PG) into phosphoenolpyruvate (PEP). It is essential for the degradation of carbohydrates via glycolysis. This chain is Enolase, found in Ectopseudomonas mendocina (strain ymp) (Pseudomonas mendocina).